Consider the following 932-residue polypeptide: Alanine--tRNA ligase (932 aa).

Residues H623, H627, C726, and H730 each contribute to the Zn(2+) site. The interval 893-916 is disordered; it reads RVGGGGGGPPDFAQGGGPDVDSLD. Residues 894 to 910 show a composition bias toward gly residues; it reads VGGGGGGPPDFAQGGGP.

This sequence belongs to the class-II aminoacyl-tRNA synthetase family. Zn(2+) serves as cofactor.

The protein resides in the cytoplasm. It carries out the reaction tRNA(Ala) + L-alanine + ATP = L-alanyl-tRNA(Ala) + AMP + diphosphate. Catalyzes the attachment of alanine to tRNA(Ala) in a two-step reaction: alanine is first activated by ATP to form Ala-AMP and then transferred to the acceptor end of tRNA(Ala). Also edits incorrectly charged Ser-tRNA(Ala) and Gly-tRNA(Ala) via its editing domain. In Natronomonas pharaonis (strain ATCC 35678 / DSM 2160 / CIP 103997 / JCM 8858 / NBRC 14720 / NCIMB 2260 / Gabara) (Halobacterium pharaonis), this protein is Alanine--tRNA ligase.